The sequence spans 91 residues: Putative defensin-like protein 83 (91 aa).

Residues 1-27 form the signal peptide; it reads MATNKFLSILLLSLMAFAAILLPMISG. 4 cysteine pairs are disulfide-bonded: cysteine 32-cysteine 71, cysteine 37-cysteine 57, cysteine 43-cysteine 69, and cysteine 47-cysteine 70.

This sequence belongs to the DEFL family.

It is found in the secreted. This chain is Putative defensin-like protein 83 (LCR46), found in Arabidopsis thaliana (Mouse-ear cress).